A 47-amino-acid chain; its full sequence is Photosystem II reaction center protein K (47 aa).

Positions 1 to 10 (MALINFDLLA) are excised as a propeptide. A helical membrane pass occupies residues 26-46 (LPLIPLFFFLLVFVWQAAVGF).

The protein belongs to the PsbK family. PSII is composed of 1 copy each of membrane proteins PsbA, PsbB, PsbC, PsbD, PsbE, PsbF, PsbH, PsbI, PsbJ, PsbK, PsbL, PsbM, PsbT, PsbX, PsbY, Psb30/Ycf12, peripheral proteins PsbO, CyanoQ (PsbQ), PsbU, PsbV and a large number of cofactors. It forms dimeric complexes.

The protein resides in the cellular thylakoid membrane. Functionally, one of the components of the core complex of photosystem II (PSII). PSII is a light-driven water:plastoquinone oxidoreductase that uses light energy to abstract electrons from H(2)O, generating O(2) and a proton gradient subsequently used for ATP formation. It consists of a core antenna complex that captures photons, and an electron transfer chain that converts photonic excitation into a charge separation. The polypeptide is Photosystem II reaction center protein K (Prochlorococcus marinus (strain NATL2A)).